Here is a 250-residue protein sequence, read N- to C-terminus: Aquaporin TIP2-1 (250 aa).

M1 carries the post-translational modification N-acetylmethionine. Residues M1–A20 are Cytoplasmic-facing. At A2 the chain carries N-acetylalanine; in Aquaporin TIP2-1, N-terminally processed. The helical transmembrane segment at Y21 to A41 threads the bilayer. Residues Y42–P54 lie on the Vacuolar side of the membrane. The helical transmembrane segment at G55–A75 threads the bilayer. At N76 to V98 the chain is on the cytoplasmic side. The short motif at N83–A85 is the NPA 1 element. A helical membrane pass occupies residues I99–L119. Topologically, residues K120 to E141 are vacuolar. A helical transmembrane segment spans residues G142–A162. The Cytoplasmic segment spans residues D163–S168. Residues L169–G189 form a helical membrane-spanning segment. Residues P190–W215 lie on the Vacuolar side of the membrane. The short motif at N197–A199 is the NPA 2 element. Residues V216 to F236 traverse the membrane as a helical segment. Residues M237–F250 lie on the Cytoplasmic side of the membrane.

This sequence belongs to the MIP/aquaporin (TC 1.A.8) family. TIP (TC 1.A.8.10) subfamily. Interacts with cucumber mosaic virus (CMV) Protein 1a. In terms of tissue distribution, strongly expressed in shoot, rosette, bolt and flowers. Also expressed in roots, flower buds and above ground.

The protein localises to the vacuole membrane. In terms of biological role, aquaporin required to facilitate the transport of water from the vacuolar compartment to the cytoplasm. Does not promote glycerol permeability. Its function is impaired by Hg(2+). Transports urea in yeast cells and Xenopus laevis oocytes in a pH-independent manner. Transports methylammonium or ammonium in yeast cells and Xenopus laevis oocytes, preferentially at high medium pH. May participate in vacuolar compartmentation and detoxification of ammonium. This Arabidopsis thaliana (Mouse-ear cress) protein is Aquaporin TIP2-1 (TIP2-1).